The chain runs to 232 residues: 5'-methylthioadenosine/S-adenosylhomocysteine nucleosidase (232 aa).

Glu-12 serves as the catalytic Proton acceptor. Substrate contacts are provided by residues Gly-78, Ile-152, and 173–174 (ME). Catalysis depends on Asp-197, which acts as the Proton donor.

Belongs to the PNP/UDP phosphorylase family. MtnN subfamily. In terms of assembly, homodimer.

The catalysed reaction is S-adenosyl-L-homocysteine + H2O = S-(5-deoxy-D-ribos-5-yl)-L-homocysteine + adenine. It catalyses the reaction S-methyl-5'-thioadenosine + H2O = 5-(methylsulfanyl)-D-ribose + adenine. The enzyme catalyses 5'-deoxyadenosine + H2O = 5-deoxy-D-ribose + adenine. It functions in the pathway amino-acid biosynthesis; L-methionine biosynthesis via salvage pathway; S-methyl-5-thio-alpha-D-ribose 1-phosphate from S-methyl-5'-thioadenosine (hydrolase route): step 1/2. Catalyzes the irreversible cleavage of the glycosidic bond in both 5'-methylthioadenosine (MTA) and S-adenosylhomocysteine (SAH/AdoHcy) to adenine and the corresponding thioribose, 5'-methylthioribose and S-ribosylhomocysteine, respectively. Also cleaves 5'-deoxyadenosine, a toxic by-product of radical S-adenosylmethionine (SAM) enzymes, into 5-deoxyribose and adenine. Thus, is required for in vivo function of the radical SAM enzymes biotin synthase and lipoic acid synthase, that are inhibited by 5'-deoxyadenosine accumulation. The polypeptide is 5'-methylthioadenosine/S-adenosylhomocysteine nucleosidase (Escherichia fergusonii (strain ATCC 35469 / DSM 13698 / CCUG 18766 / IAM 14443 / JCM 21226 / LMG 7866 / NBRC 102419 / NCTC 12128 / CDC 0568-73)).